Reading from the N-terminus, the 155-residue chain is Endoribonuclease YbeY (155 aa).

His110, His114, and His120 together coordinate Zn(2+).

It belongs to the endoribonuclease YbeY family. Zn(2+) serves as cofactor.

It is found in the cytoplasm. Single strand-specific metallo-endoribonuclease involved in late-stage 70S ribosome quality control and in maturation of the 3' terminus of the 16S rRNA. The sequence is that of Endoribonuclease YbeY from Deinococcus radiodurans (strain ATCC 13939 / DSM 20539 / JCM 16871 / CCUG 27074 / LMG 4051 / NBRC 15346 / NCIMB 9279 / VKM B-1422 / R1).